Consider the following 479-residue polypeptide: Putative L-cysteine desulfhydrase 2 (479 aa).

A disordered region spans residues 1–36 (MASLQSGGDAAANGVDADVDGAASPPSAKRPRAGAG). Residues 7–36 (GGDAAANGVDADVDGAASPPSAKRPRAGAG) are compositionally biased toward low complexity. Residue Lys270 is modified to N6-(pyridoxal phosphate)lysine.

This sequence belongs to the class-V pyridoxal-phosphate-dependent aminotransferase family. The cofactor is pyridoxal 5'-phosphate.

It catalyses the reaction L-cysteine + H2O = hydrogen sulfide + pyruvate + NH4(+) + H(+). In terms of biological role, catalyzes the production of hydrogen sulfide (H2S) from cysteine. The polypeptide is Putative L-cysteine desulfhydrase 2 (Oryza sativa subsp. japonica (Rice)).